Reading from the N-terminus, the 722-residue chain is MPLQTFLFEIGTEELPADFVRSAITQWQGLIPPGLAAEFLQPESVEIYGTPRRLAVLIKGLPECQPDRLEEIKGPPASAAFKDGQPTPAALGFAKKQGVNPEDFEIRSTPKGDFIFVNKQLQGQASRDLLPKLALSWLKALDGRRFMRWGDGDWRFPRPIRWLVCLLDDQVLPLQIDNGSTTLVGDRLSRGHRILHPADVSLEHGQNYLAQLKTAGVVVDPQERRAMIEQQITTQAATLEGEAIIYEDLLDEVEQLVEYPTAVLGKFDQEFLSLPREVTTTVMVTHQRYFPVVDKDGRLLPHFITIANGDPSKGDIIAAGNGRVIRARLADAKFFYQADCDDSLDSYLPQLETVTFQEELGTMRDKVDRIMEMAAAIADQLGVTEQQRGEIDSTAMLCKADLVTQMVYEFPELQGIMGEKYALVSGESAAVAQGIVEHYLPRHQDDDLPQGLPGQVVGMADRLDTLVSIFGLGLLPTGSSDPFALRRAANAVINVAWAASLEINLLELLTQGCRDFVTSHPDKTSPLQALKTFFLQRLQTLLQDEQGIDYDLVNAVLGNGETNCDEAQSRLHDRLLADLQDVKERAQYLQELRDNGHLDAIYPTVNRSAKLASKGTLPTDQLDPRPVIQAPQLVQDSEKAVYQALLAIYPKAVEVQESRDYETLVNALHELAPTVAEFFDGPDSVLVMAENDELRQNRLNLLGLIRNYALILGDFGAIVKGI.

It belongs to the class-II aminoacyl-tRNA synthetase family. Tetramer of two alpha and two beta subunits.

The protein resides in the cytoplasm. The catalysed reaction is tRNA(Gly) + glycine + ATP = glycyl-tRNA(Gly) + AMP + diphosphate. This Synechocystis sp. (strain ATCC 27184 / PCC 6803 / Kazusa) protein is Glycine--tRNA ligase beta subunit (glyS).